The chain runs to 310 residues: DNA damage-repair/toleration protein DRT102 (310 aa).

Ala-2 bears the N-acetylalanine mark. In terms of domain architecture, Cupin type-2 spans Ile-219–Glu-282.

The sequence is that of DNA damage-repair/toleration protein DRT102 (DRT102) from Arabidopsis thaliana (Mouse-ear cress).